The primary structure comprises 293 residues: ATP synthase gamma chain (293 aa).

This sequence belongs to the ATPase gamma chain family. In terms of assembly, F-type ATPases have 2 components, CF(1) - the catalytic core - and CF(0) - the membrane proton channel. CF(1) has five subunits: alpha(3), beta(3), gamma(1), delta(1), epsilon(1). CF(0) has three main subunits: a, b and c.

The protein resides in the cell membrane. Produces ATP from ADP in the presence of a proton gradient across the membrane. The gamma chain is believed to be important in regulating ATPase activity and the flow of protons through the CF(0) complex. The chain is ATP synthase gamma chain from Streptococcus gordonii (strain Challis / ATCC 35105 / BCRC 15272 / CH1 / DL1 / V288).